A 437-amino-acid chain; its full sequence is UDP-N-acetylmuramate--L-alanine ligase (437 aa).

108–114 lines the ATP pocket; it reads GAHGKTS.

This sequence belongs to the MurCDEF family.

The protein resides in the cytoplasm. The catalysed reaction is UDP-N-acetyl-alpha-D-muramate + L-alanine + ATP = UDP-N-acetyl-alpha-D-muramoyl-L-alanine + ADP + phosphate + H(+). Its pathway is cell wall biogenesis; peptidoglycan biosynthesis. Its function is as follows. Cell wall formation. In Staphylococcus aureus, this protein is UDP-N-acetylmuramate--L-alanine ligase.